The following is a 272-amino-acid chain: Tryptophan synthase alpha chain (272 aa).

Active-site proton acceptor residues include Glu-60 and Asp-71.

It belongs to the TrpA family. As to quaternary structure, tetramer of two alpha and two beta chains.

It catalyses the reaction (1S,2R)-1-C-(indol-3-yl)glycerol 3-phosphate + L-serine = D-glyceraldehyde 3-phosphate + L-tryptophan + H2O. It participates in amino-acid biosynthesis; L-tryptophan biosynthesis; L-tryptophan from chorismate: step 5/5. In terms of biological role, the alpha subunit is responsible for the aldol cleavage of indoleglycerol phosphate to indole and glyceraldehyde 3-phosphate. The polypeptide is Tryptophan synthase alpha chain (Methanosarcina acetivorans (strain ATCC 35395 / DSM 2834 / JCM 12185 / C2A)).